A 140-amino-acid chain; its full sequence is Small ribosomal subunit protein uS12 (140 aa).

The residue at position 102 (Asp102) is a 3-methylthioaspartic acid.

The protein belongs to the universal ribosomal protein uS12 family. As to quaternary structure, part of the 30S ribosomal subunit. Contacts proteins S8 and S17. May interact with IF1 in the 30S initiation complex.

Its function is as follows. With S4 and S5 plays an important role in translational accuracy. In terms of biological role, interacts with and stabilizes bases of the 16S rRNA that are involved in tRNA selection in the A site and with the mRNA backbone. Located at the interface of the 30S and 50S subunits, it traverses the body of the 30S subunit contacting proteins on the other side and probably holding the rRNA structure together. The combined cluster of proteins S8, S12 and S17 appears to hold together the shoulder and platform of the 30S subunit. The protein is Small ribosomal subunit protein uS12 of Bacillus cereus (strain G9842).